We begin with the raw amino-acid sequence, 274 residues long: NH(3)-dependent NAD(+) synthetase (274 aa).

ATP is bound at residue G46–S53. D52 contributes to the Mg(2+) binding site. R140 serves as a coordination point for deamido-NAD(+). An ATP-binding site is contributed by T160. Residue E165 coordinates Mg(2+). Residues K173 and D180 each coordinate deamido-NAD(+). 2 residues coordinate ATP: K189 and T211. H260–K261 serves as a coordination point for deamido-NAD(+).

The protein belongs to the NAD synthetase family. In terms of assembly, homodimer.

It carries out the reaction deamido-NAD(+) + NH4(+) + ATP = AMP + diphosphate + NAD(+) + H(+). It participates in cofactor biosynthesis; NAD(+) biosynthesis; NAD(+) from deamido-NAD(+) (ammonia route): step 1/1. In terms of biological role, catalyzes the ATP-dependent amidation of deamido-NAD to form NAD. Uses ammonia as a nitrogen source. The protein is NH(3)-dependent NAD(+) synthetase of Streptococcus pyogenes serotype M6 (strain ATCC BAA-946 / MGAS10394).